A 274-amino-acid chain; its full sequence is tRNA pseudouridine synthase A (274 aa).

Residue aspartate 52 is the Nucleophile of the active site. Tyrosine 110 serves as a coordination point for substrate.

This sequence belongs to the tRNA pseudouridine synthase TruA family. As to quaternary structure, homodimer.

It carries out the reaction uridine(38/39/40) in tRNA = pseudouridine(38/39/40) in tRNA. Functionally, formation of pseudouridine at positions 38, 39 and 40 in the anticodon stem and loop of transfer RNAs. This chain is tRNA pseudouridine synthase A, found in Ralstonia nicotianae (strain ATCC BAA-1114 / GMI1000) (Ralstonia solanacearum).